An 88-amino-acid chain; its full sequence is Augerpeptide Hhe9a (88 aa).

A signal peptide spans 1 to 21 (MMTKTGLVLLFAFLLVFPVSS). A propeptide spanning residues 22–49 (LPMDAEAGHARLEMDKRDAGNEAWTRLL) is cleaved from the precursor. 3 disulfides stabilise this stretch: Cys56/Cys71, Cys61/Cys73, and Cys67/Cys86.

As to expression, expressed by the venom duct.

It localises to the secreted. The sequence is that of Augerpeptide Hhe9a from Hastula hectica (Sea snail).